We begin with the raw amino-acid sequence, 150 residues long: 3-hydroxyacyl-[acyl-carrier-protein] dehydratase FabZ (150 aa).

Histidine 54 is an active-site residue.

It belongs to the thioester dehydratase family. FabZ subfamily.

The protein localises to the cytoplasm. The catalysed reaction is a (3R)-hydroxyacyl-[ACP] = a (2E)-enoyl-[ACP] + H2O. Involved in unsaturated fatty acids biosynthesis. Catalyzes the dehydration of short chain beta-hydroxyacyl-ACPs and long chain saturated and unsaturated beta-hydroxyacyl-ACPs. In Colwellia psychrerythraea (strain 34H / ATCC BAA-681) (Vibrio psychroerythus), this protein is 3-hydroxyacyl-[acyl-carrier-protein] dehydratase FabZ.